Here is a 505-residue protein sequence, read N- to C-terminus: Betaine aldehyde dehydrogenase 1 (505 aa).

Position 163–172 (163–172 (WNYPLLMATW)) interacts with betaine aldehyde. 240–245 (GSTETG) contributes to the NAD(+) binding site. Residues E262, 294 to 297 (QVCS), and C455 contribute to the betaine aldehyde site. Residues E262 and C296 contribute to the active site. 4-aminobutanal is bound by residues 262–263 (EL) and C296. A 4-aminobutanal-binding site is contributed by W461. The Microbody targeting signal motif lies at 503–505 (SKL).

It belongs to the aldehyde dehydrogenase family. In terms of assembly, homodimer.

It localises to the peroxisome. It catalyses the reaction betaine aldehyde + NAD(+) + H2O = glycine betaine + NADH + 2 H(+). It participates in amine and polyamine biosynthesis; betaine biosynthesis via choline pathway; betaine from betaine aldehyde: step 1/1. Dehydrogenase that can use N-acetyl-gamma-aminobutyraldehyde (NAGABald), gamma-guanidinobutyraldehyde (GGBald), betaine aldehyde (Bet-ald), gamma-aminobutyraldehyde (GAB-ald), acetaldehyde, 4-aminobutylaldehyde (AB-ald), 3-aminopropionaldehyde (AP-ald), 4-N-trimethylaminobutyraldehyde (TMAB-ald) and 3-N-trimethylaminopropionaldehyde (TMAP-ald) as substrates. Catalyzes the oxidation of GAB-ald more efficiently than Bet-ald. May convert acetaldehyde into acetate, thus facilitating the production of acetyl-CoA in peroxisomes under anaerobic conditions. The sequence is that of Betaine aldehyde dehydrogenase 1 (BADH1) from Oryza sativa subsp. japonica (Rice).